Here is a 302-residue protein sequence, read N- to C-terminus: Glutaminase (302 aa).

Serine 61, asparagine 111, glutamate 155, asparagine 162, tyrosine 186, tyrosine 238, and valine 256 together coordinate substrate.

It belongs to the glutaminase family. In terms of assembly, homotetramer.

It catalyses the reaction L-glutamine + H2O = L-glutamate + NH4(+). The polypeptide is Glutaminase (Pseudomonas syringae pv. tomato (strain ATCC BAA-871 / DC3000)).